The primary structure comprises 105 residues: uncharacterized protein (105 aa).

The region spanning 2-42 (QVLIGTKLVTEGIDIKQLMMVIMLDNRLNIIELIQGVGRLR) is the Helicase C-terminal domain.

Belongs to the helicase family. Yeast subtelomeric Y' repeat subfamily.

This is an uncharacterized protein from Saccharomyces cerevisiae (strain ATCC 204508 / S288c) (Baker's yeast).